The primary structure comprises 173 residues: dCTP deaminase, dUMP-forming (173 aa).

DCTP contacts are provided by residues Arg93 to Arg98, Asp111, Thr119 to Glu121, Gln138, and Tyr151. Residue Glu121 is the Proton donor/acceptor of the active site.

It belongs to the dCTP deaminase family. In terms of assembly, homotrimer.

It catalyses the reaction dCTP + 2 H2O = dUMP + NH4(+) + diphosphate. Its pathway is pyrimidine metabolism; dUMP biosynthesis; dUMP from dCTP: step 1/1. Functionally, bifunctional enzyme that catalyzes both the deamination of dCTP to dUTP and the hydrolysis of dUTP to dUMP without releasing the toxic dUTP intermediate. This is dCTP deaminase, dUMP-forming from Clostridium botulinum (strain Alaska E43 / Type E3).